The chain runs to 102 residues: RNA-binding protein Hfq (102 aa).

Residues 9-68 (DPFLNALRRERVPVSIYLVNGIKLQGQIESFDQFVILLKNTVSQMVYKHAISTVVPSRPV) enclose the Sm domain. Positions 63–102 (VPSRPVSHHSNNAGGGTSSNYHHGSSAQNTSAQQDSEETE) are disordered. Over residues 70–96 (HHSNNAGGGTSSNYHHGSSAQNTSAQQ) the composition is skewed to polar residues.

Belongs to the Hfq family. In terms of assembly, homohexamer.

In terms of biological role, RNA chaperone that binds small regulatory RNA (sRNAs) and mRNAs to facilitate mRNA translational regulation in response to envelope stress, environmental stress and changes in metabolite concentrations. Also binds with high specificity to tRNAs. The sequence is that of RNA-binding protein Hfq from Escherichia fergusonii (strain ATCC 35469 / DSM 13698 / CCUG 18766 / IAM 14443 / JCM 21226 / LMG 7866 / NBRC 102419 / NCTC 12128 / CDC 0568-73).